The primary structure comprises 139 residues: ATP synthase epsilon chain (139 aa).

The protein belongs to the ATPase epsilon chain family. F-type ATPases have 2 components, CF(1) - the catalytic core - and CF(0) - the membrane proton channel. CF(1) has five subunits: alpha(3), beta(3), gamma(1), delta(1), epsilon(1). CF(0) has three main subunits: a, b and c.

The protein resides in the cell inner membrane. In terms of biological role, produces ATP from ADP in the presence of a proton gradient across the membrane. This is ATP synthase epsilon chain (atpC) from Escherichia coli O157:H7.